A 157-amino-acid polypeptide reads, in one-letter code: Putative low molecular weight protein-tyrosine-phosphatase slr0328 (157 aa).

Cys7 acts as the Nucleophile in catalysis. The active site involves Arg13. The active-site Proton donor is Asp124.

Belongs to the low molecular weight phosphotyrosine protein phosphatase family.

The enzyme catalyses O-phospho-L-tyrosyl-[protein] + H2O = L-tyrosyl-[protein] + phosphate. This is Putative low molecular weight protein-tyrosine-phosphatase slr0328 from Synechocystis sp. (strain ATCC 27184 / PCC 6803 / Kazusa).